The chain runs to 259 residues: Global transcriptional regulator CodY (259 aa).

The segment at 1 to 155 is GAF domain; that stretch reads MELLAKTRKL…SSTVVGMEIL (155 aa). Positions 203–222 form a DNA-binding region, H-T-H motif; the sequence is ASKIADRVGITRSVIVNALR. S215 is subject to Phosphoserine.

This sequence belongs to the CodY family.

It is found in the cytoplasm. Its function is as follows. DNA-binding global transcriptional regulator which is involved in the adaptive response to starvation and acts by directly or indirectly controlling the expression of numerous genes in response to nutrient availability. During rapid exponential growth, CodY is highly active and represses genes whose products allow adaptation to nutrient depletion. This is Global transcriptional regulator CodY from Bacillus anthracis (strain A0248).